Consider the following 354-residue polypeptide: UDP-N-acetylglucosamine--N-acetylmuramyl-(pentapeptide) pyrophosphoryl-undecaprenol N-acetylglucosamine transferase (354 aa).

UDP-N-acetyl-alpha-D-glucosamine is bound by residues 11-13 (TAG), Arg-164, Ser-194, and Gln-289.

This sequence belongs to the glycosyltransferase 28 family. MurG subfamily.

The protein localises to the cell membrane. It catalyses the reaction di-trans,octa-cis-undecaprenyl diphospho-N-acetyl-alpha-D-muramoyl-L-alanyl-D-glutamyl-meso-2,6-diaminopimeloyl-D-alanyl-D-alanine + UDP-N-acetyl-alpha-D-glucosamine = di-trans,octa-cis-undecaprenyl diphospho-[N-acetyl-alpha-D-glucosaminyl-(1-&gt;4)]-N-acetyl-alpha-D-muramoyl-L-alanyl-D-glutamyl-meso-2,6-diaminopimeloyl-D-alanyl-D-alanine + UDP + H(+). The protein operates within cell wall biogenesis; peptidoglycan biosynthesis. Functionally, cell wall formation. Catalyzes the transfer of a GlcNAc subunit on undecaprenyl-pyrophosphoryl-MurNAc-pentapeptide (lipid intermediate I) to form undecaprenyl-pyrophosphoryl-MurNAc-(pentapeptide)GlcNAc (lipid intermediate II). This is UDP-N-acetylglucosamine--N-acetylmuramyl-(pentapeptide) pyrophosphoryl-undecaprenol N-acetylglucosamine transferase from Clostridium botulinum (strain 657 / Type Ba4).